Reading from the N-terminus, the 662-residue chain is DNA ligase (662 aa).

NAD(+)-binding positions include 31 to 35 and 79 to 80; these read DKDYD and SL. The active-site N6-AMP-lysine intermediate is K121. Residues R143, E177, and K313 each contribute to the NAD(+) site. Residues C406, C409, C422, and C428 each contribute to the Zn(2+) site. One can recognise a BRCT domain in the interval 586-662; the sequence is VLESPFMGKT…LSEEEFENMI (77 aa).

Belongs to the NAD-dependent DNA ligase family. LigA subfamily. Requires Mg(2+) as cofactor. Mn(2+) is required as a cofactor.

The catalysed reaction is NAD(+) + (deoxyribonucleotide)n-3'-hydroxyl + 5'-phospho-(deoxyribonucleotide)m = (deoxyribonucleotide)n+m + AMP + beta-nicotinamide D-nucleotide.. Its function is as follows. DNA ligase that catalyzes the formation of phosphodiester linkages between 5'-phosphoryl and 3'-hydroxyl groups in double-stranded DNA using NAD as a coenzyme and as the energy source for the reaction. It is essential for DNA replication and repair of damaged DNA. The chain is DNA ligase from Clostridium perfringens (strain 13 / Type A).